Here is an 89-residue protein sequence, read N- to C-terminus: Small ribosomal subunit protein uS17 (89 aa).

The protein belongs to the universal ribosomal protein uS17 family. Part of the 30S ribosomal subunit.

One of the primary rRNA binding proteins, it binds specifically to the 5'-end of 16S ribosomal RNA. The chain is Small ribosomal subunit protein uS17 from Coxiella burnetii (strain RSA 493 / Nine Mile phase I).